A 903-amino-acid chain; its full sequence is FIGNL1-interacting regulator of recombination and mitosis (903 aa).

A phosphoserine mark is found at Ser101 and Ser795. The residue at position 843 (Lys843) is an N6-acetyllysine.

In terms of assembly, interacts (via its N-terminal region) with PLK1; controls PLK1 kinase activity. Interacts (via the KVVXF motif) with PPP1CC; controls PLK1 kinase activity. Interacts with FIGNL1; may regulate homologous recombination. Post-translationally, phosphorylation at Ser-101 by PLK1 strengthens FIRRM-PLK1 interaction. Phosphorylation at Ser-795 by PLK1 negatively regulates its interaction with PPP1CC.

It localises to the chromosome. The protein localises to the centromere. It is found in the kinetochore. Its subcellular location is the nucleus. The protein resides in the midbody. It localises to the cytoplasm. The protein localises to the cytoskeleton. It is found in the spindle. Functionally, regulates PLK1 kinase activity at kinetochores and promotes faithful chromosome segregation in prometaphase by bridging kinase and phosphatase activities. Phosphorylation of FIRRM by PLK1 negatively regulates its interaction with the phosphatase, PPP1CC, thus creating a negative feedback loop for maintaining proper PLK1 kinase activity during mitosis. In complex with FIGL1 may regulate homologous recombination. The chain is FIGNL1-interacting regulator of recombination and mitosis from Mus musculus (Mouse).